A 262-amino-acid polypeptide reads, in one-letter code: Hydroxyethylthiazole kinase (262 aa).

A substrate-binding site is contributed by M50. The ATP site is built by R125 and T171. Residue G198 participates in substrate binding.

This sequence belongs to the Thz kinase family. It depends on Mg(2+) as a cofactor.

The enzyme catalyses 5-(2-hydroxyethyl)-4-methylthiazole + ATP = 4-methyl-5-(2-phosphooxyethyl)-thiazole + ADP + H(+). Its pathway is cofactor biosynthesis; thiamine diphosphate biosynthesis; 4-methyl-5-(2-phosphoethyl)-thiazole from 5-(2-hydroxyethyl)-4-methylthiazole: step 1/1. Catalyzes the phosphorylation of the hydroxyl group of 4-methyl-5-beta-hydroxyethylthiazole (THZ). The chain is Hydroxyethylthiazole kinase from Escherichia coli O45:K1 (strain S88 / ExPEC).